The primary structure comprises 1164 residues: DNA-directed RNA polymerase 132 kDa polypeptide (1164 aa).

The protein belongs to the RNA polymerase beta chain family. As to quaternary structure, the DNA-dependent RNA polymerase used for intermediate and late genes expression consists of eight subunits (147) kDa, (133) kDa, (35) kDa, (30) kDa, (22) kDa, (19) kDa, (18) kDa and (7) kDa totalling more than 500 kDa in mass. The same holoenzyme, with the addition of the transcription-specificity factor RAP94, is used for early gene expression.

It is found in the virion. The enzyme catalyses RNA(n) + a ribonucleoside 5'-triphosphate = RNA(n+1) + diphosphate. Functionally, part of the DNA-dependent RNA polymerase which catalyzes the transcription of viral DNA into RNA using the four ribonucleoside triphosphates as substrates. Responsible for the transcription of early, intermediate and late genes. DNA-dependent RNA polymerase associates with the early transcription factor (ETF), itself composed of D6 and A7, thereby allowing the early genes transcription. Late transcription, and probably also intermediate transcription, require newly synthesized RNA polymerase. This chain is DNA-directed RNA polymerase 132 kDa polypeptide (RPO132), found in Cowpox virus (strain GRI-90 / Grishak) (CPV).